Reading from the N-terminus, the 96-residue chain is Protein RnfH (96 aa).

The protein belongs to the UPF0125 (RnfH) family.

This chain is Protein RnfH, found in Psychromonas ingrahamii (strain DSM 17664 / CCUG 51855 / 37).